Reading from the N-terminus, the 546-residue chain is DNA replication factor Cdt1 (546 aa).

Over residues 1–11 the composition is skewed to basic and acidic residues; the sequence is MEQRRVTDFFA. The PIP-box K+4 motif motif lies at 1 to 23; the sequence is MEQRRVTDFFARRRPGPPRIAPP. Disordered stretches follow at residues 1 to 118 and 143 to 165; these read MEQR…QDQD and SAQD…PCGE. The segment covering 28 to 45 has biased composition (low complexity); the sequence is RTPSPARPALRAPASATS. Thr29 carries the phosphothreonine; by MAPK8 modification. Ser31 is subject to Phosphoserine. A Cyclin-binding motif motif is present at residues 68–70; it reads RRL. Ser93 is modified (phosphoserine; by MAPK8). The interaction with GMNN stretch occupies residues 150–190; the sequence is SCTPEAEGRPEEPCGEKAPAYQRFHALAQPGLPGLVLPYKY. Positions 155-164 are enriched in basic and acidic residues; the sequence is AEGRPEEPCG. Ser318 carries the post-translational modification Phosphoserine; by MAPK8. Residues Ser380 and Ser394 each carry the phosphoserine modification. Residues 383–415 are disordered; the sequence is ALRSAAPSSPGSPRPALPATPPATPPAASPSAL. The span at 392–410 shows a compositional bias: pro residues; sequence PGSPRPALPATPPATPPAA. The interval 451–546 is interaction with LRWD1; sequence LERLPELARV…AHQTRAEEGL (96 aa).

Belongs to the Cdt1 family. As to quaternary structure, interacts with GMNN; the interaction inhibits binding of the MCM complex to origins of replication. Interacts with MCM6. Interacts with CDC6; are mutually dependent on one another for loading MCM complexes onto chromatin. Interacts with PCNA. Interacts with LRWD1 during G1 phase and during mitosis. Interacts with NDC80 subunit of the NDC80 complex; leading to kinetochore localization. Interacts with GRWD1; origin binding of GRWD1 is dependent on CDT1. Interacts with KAT7. Interacts with ubiquitin-binding protein FAF1; the interaction is likely to promote CDT1 degradation. Post-translationally, two independent E3 ubiquitin ligase complexes, SCF(SKP2) and the DCX(DTL) complex, mediated CDT1 degradation in S phase. Ubiquitinated by the DCX(DTL) complex, in response to DNA damage, leading to its degradation. Ubiquitination by the DCX(DTL) complex is necessary to ensure proper cell cycle regulation and is PCNA-dependent: interacts with PCNA via its PIP-box, while the presence of the containing the 'K+4' motif in the PIP box, recruit the DCX(DTL) complex, leading to its degradation. Phosphorylation at Thr-29 by CDK2 targets CDT1 for ubiquitination by SCF(SKP2) E3 ubiquitin ligase and subsequent degradation. The interaction with GMNN protects it against ubiquitination. Deubiquitinated by USP37. Ubiquitinated and degraded by the SCF(FBXO31) complex during the G2 phase to prevent re-replication. In terms of processing, phosphorylation by cyclin A-dependent kinases at Thr-29 targets CDT1 for ubiquitynation by SCF(SKP2) E3 ubiquitin ligase and subsequent degradation. Phosphorylated at Thr-29 by MAPK8/JNK1, which blocks replication licensing in response to stress. Binding to GMNN is not affected by phosphorylation.

Its subcellular location is the nucleus. It localises to the chromosome. It is found in the centromere. The protein localises to the kinetochore. Functionally, required for both DNA replication and mitosis. DNA replication licensing factor, required for pre-replication complex assembly. Cooperates with CDC6 and the origin recognition complex (ORC) during G1 phase of the cell cycle to promote the loading of the mini-chromosome maintenance (MCM) complex onto DNA to generate pre-replication complexes (pre-RC). Required also for mitosis by promoting stable kinetochore-microtubule attachments. Potential oncogene. The chain is DNA replication factor Cdt1 from Homo sapiens (Human).